The following is a 79-amino-acid chain: Putative membrane protein insertion efficiency factor (79 aa).

The protein belongs to the UPF0161 family.

It is found in the cell inner membrane. In terms of biological role, could be involved in insertion of integral membrane proteins into the membrane. The protein is Putative membrane protein insertion efficiency factor of Prochlorococcus marinus (strain NATL2A).